Reading from the N-terminus, the 561-residue chain is ATP-dependent RNA helicase MRH4, mitochondrial (561 aa).

Residues 1–26 constitute a mitochondrion transit peptide; that stretch reads MSLFFKPVISPQWSFPVLLKIGVRSY. The segment at 29–72 is disordered; it reads GPRTKHKGNSPLASVPTGSSNKNRKQKAKGKKGNKKNDPDQAFN. Over residues 50 to 62 the composition is skewed to basic residues; that stretch reads KNRKQKAKGKKGN. The Q motif motif lies at 98-129; it reads SNFDQLLILPPVRDAVKEIISKESLKLQDSRK. In terms of domain architecture, Helicase ATP-binding spans 131–319; sequence TSENIIPSPI…NINHLIFCSA (189 aa). 144–151 contributes to the ATP binding site; the sequence is AIKRISKN. A DEAD box motif is present at residues 267 to 270; that stretch reads SIRM. Residues 350–539 form the Helicase C-terminal domain; that stretch reads ALDFKVINSA…KQGGRVFMLT (190 aa).

It belongs to the DEAD box helicase family. MRH4 subfamily.

The protein resides in the mitochondrion. It carries out the reaction ATP + H2O = ADP + phosphate + H(+). Functionally, ATP-binding RNA helicase involved in mitochondrial RNA metabolism. Required for maintenance of mitochondrial DNA. The protein is ATP-dependent RNA helicase MRH4, mitochondrial (MRH4) of Saccharomyces cerevisiae (strain YJM789) (Baker's yeast).